Here is a 516-residue protein sequence, read N- to C-terminus: Immunoglobulin G-binding protein A (516 aa).

Positions 1–36 are cleaved as a signal peptide; the sequence is MKKKNIYSIRKLGVGIASVTLGTLLISGGVTPAANA. Positions 7-18 match the YSIRK-G/S signaling motif motif; sequence YSIRKLGVGIAS. The stretch at 37 to 92 is one Immunoglobulin-binding region E repeat; it reads AQHDEAQQNAFYQVLNMPNLNADQRNGFIQSLKDDPSQSANVLGEAQKLNDSQAPK. An Immunoglobulin-binding region D repeat occupies 93-153; sequence ADAQQNNFNK…KKLNESQAPK (61 aa). An Immunoglobulin-binding region A repeat occupies 154–211; the sequence is ADNNFNKEQQNAFYEILNMPNLNEEQRNGFIQSLKDDPSQSANLLSEAKKLNESQAPK. Residues 212–269 form an Immunoglobulin-binding region B repeat; the sequence is ADNKFNKEQQNAFYEILHLPNLNEEQRNGFIQSLKDDPSQSANLLAEAKKLNDAQAPK. The Immunoglobulin-binding region C repeat unit spans residues 270–327; sequence ADNKFNKEQQNAFYEILHLPNLTEEQRNGFIQSLKDDPSVSKEILAEAKKLNDAQAPK. The span at 318-420 shows a compositional bias: basic and acidic residues; the sequence is KKLNDAQAPK…GNKPGKEDGN (103 aa). 2 disordered regions span residues 318-440 and 467-487; these read KKLN…ANGT and KKQP…ETGE. 11 repeat units span residues 333–340, 341–348, 349–356, 357–364, 365–372, 373–380, 381–388, 389–396, 397–404, 405–412, and 413–420. Positions 333–420 are 11 X 8 AA approximate tandem repeats; it reads KPGKEDNNKP…GNKPGKEDGN (88 aa). Residues 421–465 form the LysM domain; that stretch reads GVHVVKPGDTVNDIAKANGTTADKIAADNKLADKNMIKPGQELVV. Residues 482–486 carry the LPXTG sorting signal motif; that stretch reads LPETG. Pentaglycyl murein peptidoglycan amidated threonine is present on Thr-485. Positions 486 to 516 are cleaved as a propeptide — removed by sortase A; that stretch reads GEENPFIGTTVFGGLSLALGAALLAGRRREL.

It belongs to the immunoglobulin-binding protein SpA family. In terms of assembly, interacts with host TNFRSF1A; this interaction leads to the stimulation of both surface expression and shedding of TNFRSF1A.

The protein resides in the secreted. It localises to the cell wall. Functionally, plays a role in the inhibition of the host innate and adaptive immune responses. Possesses five immunoglobulin-binding domains that capture both the fragment crystallizable region (Fc region) and the Fab region (part of Ig that identifies antigen) of immunoglobulins. In turn, Staphylococcus aureus is protected from phagocytic killing via inhibition of Ig Fc region. In addition, the host elicited B-cell response is prevented due to a decrease of antibody-secreting cell proliferation that enter the bone marrow, thereby decreasing long-term antibody production. Inhibits osteogenesis by preventing osteoblast proliferation and expression of alkaline phosphatase, type I collagen, osteopontin and osteocalcin. Acts directly as a pro-inflammatory factor in the lung through its ability to bind and activate tumor necrosis factor alpha receptor 1/TNFRSF1A. In Staphylococcus aureus (strain NCTC 8325 / PS 47), this protein is Immunoglobulin G-binding protein A (spa).